The following is a 152-amino-acid chain: Transcriptional regulator MraZ (152 aa).

SpoVT-AbrB domains follow at residues 5–52 (ASAI…PIHE) and 81–124 (AHEV…DEQA).

Belongs to the MraZ family. As to quaternary structure, forms oligomers.

The protein resides in the cytoplasm. It localises to the nucleoid. The chain is Transcriptional regulator MraZ from Shewanella oneidensis (strain ATCC 700550 / JCM 31522 / CIP 106686 / LMG 19005 / NCIMB 14063 / MR-1).